The chain runs to 92 residues: MARSLKKGPYVDLHLLKKVDAARASNDKRPIKTWSRRSTILPDFIGLTIAVHNGRTHVPVFISDNMVGHKLGEFSLTRTFKGHLADKKAKKK.

It belongs to the universal ribosomal protein uS19 family.

Functionally, protein S19 forms a complex with S13 that binds strongly to the 16S ribosomal RNA. The chain is Small ribosomal subunit protein uS19 from Neisseria meningitidis serogroup C (strain 053442).